A 176-amino-acid polypeptide reads, in one-letter code: Ferritin heavy polypeptide-like 17E (176 aa).

A Ferritin-like diiron domain is found at 10–159; the sequence is QNYDWQCEDA…GYLTNLRQMG (150 aa). The Fe cation site is built by C27, E107, and Q141.

This sequence belongs to the ferritin family. In terms of tissue distribution, expressed in the testes and spermatogonia.

This is Ferritin heavy polypeptide-like 17E from Mus musculus (Mouse).